We begin with the raw amino-acid sequence, 270 residues long: Glucosamine-6-phosphate deaminase (270 aa).

Catalysis depends on Asp72, which acts as the Proton acceptor; for enolization step. Asp141 serves as the catalytic For ring-opening step. His143 acts as the Proton acceptor; for ring-opening step in catalysis. The active-site For ring-opening step is Glu148.

The protein belongs to the glucosamine/galactosamine-6-phosphate isomerase family. NagB subfamily. Homohexamer.

It carries out the reaction alpha-D-glucosamine 6-phosphate + H2O = beta-D-fructose 6-phosphate + NH4(+). Its pathway is amino-sugar metabolism; N-acetylneuraminate degradation; D-fructose 6-phosphate from N-acetylneuraminate: step 5/5. Allosterically activated by N-acetylglucosamine 6-phosphate (GlcNAc6P). Functionally, catalyzes the reversible isomerization-deamination of glucosamine 6-phosphate (GlcN6P) to form fructose 6-phosphate (Fru6P) and ammonium ion. The sequence is that of Glucosamine-6-phosphate deaminase from Haemophilus influenzae (strain PittEE).